Consider the following 393-residue polypeptide: NAD(P)H-quinone oxidoreductase subunit H, chloroplastic (393 aa).

Belongs to the complex I 49 kDa subunit family. In terms of assembly, NDH is composed of at least 16 different subunits, 5 of which are encoded in the nucleus.

The protein localises to the plastid. It localises to the chloroplast thylakoid membrane. The enzyme catalyses a plastoquinone + NADH + (n+1) H(+)(in) = a plastoquinol + NAD(+) + n H(+)(out). It catalyses the reaction a plastoquinone + NADPH + (n+1) H(+)(in) = a plastoquinol + NADP(+) + n H(+)(out). NDH shuttles electrons from NAD(P)H:plastoquinone, via FMN and iron-sulfur (Fe-S) centers, to quinones in the photosynthetic chain and possibly in a chloroplast respiratory chain. The immediate electron acceptor for the enzyme in this species is believed to be plastoquinone. Couples the redox reaction to proton translocation, and thus conserves the redox energy in a proton gradient. In Guizotia abyssinica (Niger), this protein is NAD(P)H-quinone oxidoreductase subunit H, chloroplastic.